A 923-amino-acid chain; its full sequence is Neuropilin-1a (923 aa).

Residues 1 to 19 (MHCGLVLILFTGIFLIVSA) form the signal peptide. Residues 20–856 (LKNDKCGDNI…AGNMLKTLDP (837 aa)) lie on the Extracellular side of the membrane. 3 disulfides stabilise this stretch: Cys-25–Cys-52, Cys-80–Cys-102, and Cys-145–Cys-171. 2 consecutive CUB domains span residues 25-139 (CGDN…YEIF) and 145-263 (CSRN…FTVL). Asn-148 carries N-linked (GlcNAc...) asparagine glycosylation. Residues Glu-193, Asp-207, and Asp-248 each coordinate Ca(2+). Cys-204 and Cys-226 are disulfide-bonded. Asn-259 carries an N-linked (GlcNAc...) asparagine glycan. 2 disulfide bridges follow: Cys-273–Cys-422 and Cys-429–Cys-581. F5/8 type C domains follow at residues 273-422 (CTEP…VYGC) and 429-581 (CSGM…LLGC). Asn-520 is a glycosylation site (N-linked (GlcNAc...) asparagine). Residues 587-624 (TVPPTTPAASTTPSDECDDDQANCHSGTGDGYDQTGGT) are disordered. O-linked (Xyl...) (chondroitin sulfate) serine; alternate glycosylation occurs at Ser-612. Ser-612 is a glycosylation site (O-linked (Xyl...) (heparan sulfate) serine; alternate). An MAM domain is found at 642-811 (FACDFGWAND…DNVNMADCKD (170 aa)). Residues 857 to 877 (ILITIIAMSALGVFLGAICGV) form a helical membrane-spanning segment. Residues 878–923 (VLYCACSHSGMSDRNLSALENYNFELVDGVKLKKDKLNSQNSYSEA) lie on the Cytoplasmic side of the membrane.

The protein belongs to the neuropilin family.

The protein localises to the membrane. Its function is as follows. Receptor involved in the development of the cardiovascular system, in angiogenesis, in the formation of certain neuronal circuits and in organogenesis outside the nervous system. It mediates the chemorepulsant activity of semaphorins. Regulates angiogenesis through a VEGF-dependent pathway. This chain is Neuropilin-1a (nrp1a), found in Danio rerio (Zebrafish).